The following is a 219-amino-acid chain: Response regulator ArlR (219 aa).

The Response regulatory domain occupies 3–116; it reads NILIVEDEQN…ELLARIRAVL (114 aa). A 4-aspartylphosphate modification is found at aspartate 52. The segment at residues 122 to 219 is a DNA-binding region (ompR/PhoB-type); it reads KDVLDINGII…TVRGVGYVIR (98 aa).

Post-translationally, phosphorylated by ArlS.

It localises to the cytoplasm. In terms of biological role, member of the two-component regulatory system ArlS/ArlR. This is Response regulator ArlR (arlR) from Staphylococcus epidermidis (strain ATCC 35984 / DSM 28319 / BCRC 17069 / CCUG 31568 / BM 3577 / RP62A).